A 166-amino-acid chain; its full sequence is Small ribosomal subunit protein uS5 (166 aa).

Residues 11 to 74 (LNEKLIAVNR…EKARRNMFTI (64 aa)) enclose the S5 DRBM domain.

It belongs to the universal ribosomal protein uS5 family. As to quaternary structure, part of the 30S ribosomal subunit. Contacts proteins S4 and S8.

Its function is as follows. With S4 and S12 plays an important role in translational accuracy. Functionally, located at the back of the 30S subunit body where it stabilizes the conformation of the head with respect to the body. This is Small ribosomal subunit protein uS5 from Aliivibrio salmonicida (strain LFI1238) (Vibrio salmonicida (strain LFI1238)).